Here is a 332-residue protein sequence, read N- to C-terminus: Ribosomal RNA small subunit methyltransferase H (332 aa).

S-adenosyl-L-methionine-binding positions include 36 to 38 (GGY), aspartate 54, phenylalanine 81, aspartate 102, and glutamine 109. Residues 284-332 (VTAGQEEVSANPRARSAKLRAAERTAAPATADDGESPGWPSLANVMRGG) form a disordered region.

It belongs to the methyltransferase superfamily. RsmH family.

Its subcellular location is the cytoplasm. It carries out the reaction cytidine(1402) in 16S rRNA + S-adenosyl-L-methionine = N(4)-methylcytidine(1402) in 16S rRNA + S-adenosyl-L-homocysteine + H(+). Functionally, specifically methylates the N4 position of cytidine in position 1402 (C1402) of 16S rRNA. The sequence is that of Ribosomal RNA small subunit methyltransferase H from Nitrobacter hamburgensis (strain DSM 10229 / NCIMB 13809 / X14).